The primary structure comprises 1050 residues: Self-sufficient cytochrome P450 monooxygenase CYP505E5 (1050 aa).

Cysteine 405 contacts heme. The disordered stretch occupies residues 467–491; that stretch reads RRSMLVARDGSSGESSNHLAEARGD. Residues 500-641 form the Flavodoxin-like domain; that stretch reads VSFFYGSNSG…DLEAWEETSL (142 aa). FMN is bound by residues 506-510 and 585-617; these read SNSGT and VFGC…TRLA. One can recognise an FAD-binding FR-type domain in the interval 679–907; sequence KGLIEAKVTA…RPAKESFHLP (229 aa).

In the N-terminal section; belongs to the cytochrome P450 family. Requires FAD as cofactor. FMN is required as a cofactor. Heme serves as cofactor.

It catalyses the reaction 2 oxidized [cytochrome P450] + NADPH = 2 reduced [cytochrome P450] + NADP(+) + H(+). The catalysed reaction is an organic molecule + reduced [NADPH--hemoprotein reductase] + O2 = an alcohol + oxidized [NADPH--hemoprotein reductase] + H2O + H(+). It carries out the reaction dodecanoate + reduced [NADPH--hemoprotein reductase] + O2 = 5-hydroxydodecanoate + oxidized [NADPH--hemoprotein reductase] + H2O + H(+). The enzyme catalyses tetradecanoate + reduced [NADPH--hemoprotein reductase] + O2 = 7-hydroxytetradecanoate + oxidized [NADPH--hemoprotein reductase] + H2O + H(+). It catalyses the reaction dodecan-1-ol + reduced [NADPH--hemoprotein reductase] + O2 = 1,5-dodecanediol + oxidized [NADPH--hemoprotein reductase] + H2O + H(+). The catalysed reaction is dodecan-1-ol + reduced [NADPH--hemoprotein reductase] + O2 = 1,4-dodecanediol + oxidized [NADPH--hemoprotein reductase] + H2O + H(+). It carries out the reaction dodecan-1-ol + reduced [NADPH--hemoprotein reductase] + O2 = 1,6-dodecanediol + oxidized [NADPH--hemoprotein reductase] + H2O + H(+). Self-sufficient cytochrome P450 monooxygenase that catalyzes the regioselective in-chain hydroxylation of alkanes, fatty alcohols, and fatty acids at the omega-7 position. Performs hydroxylation of C10-C16 n-alkanes and C12 and C14 fatty alcohols; and thereby enables the one step biocatalytic synthesis of rare alcohols such as 5-dodecanol and 7-tetradecanol. Converts 1-dodecanol into 1,5-dodecanediol as major product with very little sub-terminally hydroxylated products with the 1,4-dodecanediol and 1,6-dodecanediol more abundant. Converts dodecanoic acid to 5-hydroxydodecanoic acid which can be further converted into delta-dodecalactone by lactonization of the 5-hydroxy acid at low pH. Also gives sub-terminal hydroxylation of dodecanoic acid with 9-hydroxydodecanoic acid being the second most abundant product. The protein is Self-sufficient cytochrome P450 monooxygenase CYP505E5 of Aspergillus niger.